Reading from the N-terminus, the 65-residue chain is Large ribosomal subunit protein uL30 (65 aa).

Belongs to the universal ribosomal protein uL30 family. Part of the 50S ribosomal subunit.

In Mycobacterium bovis (strain ATCC BAA-935 / AF2122/97), this protein is Large ribosomal subunit protein uL30.